A 138-amino-acid chain; its full sequence is Large ribosomal subunit protein uL16 (138 aa).

The segment covering 1–13 has biased composition (basic residues); the sequence is MLQPARRKYRKEQ. Residues 1–22 are disordered; it reads MLQPARRKYRKEQKGRNTGIAT.

It belongs to the universal ribosomal protein uL16 family. Part of the 50S ribosomal subunit.

Its function is as follows. Binds 23S rRNA and is also seen to make contacts with the A and possibly P site tRNAs. This is Large ribosomal subunit protein uL16 from Delftia acidovorans (strain DSM 14801 / SPH-1).